The following is a 1378-amino-acid chain: S-cell enriched with leucine-rich repeat-containing protein slrA (1378 aa).

Residues 17–37 (IFKILYCYLFTSLLLILSTWV) traverse the membrane as a helical segment. Residues asparagine 59, asparagine 112, asparagine 143, asparagine 172, and asparagine 201 are each glycosylated (N-linked (GlcNAc...) asparagine). 9 LRR repeats span residues 143–165 (NLTG…LPYL), 167–188 (HLRN…GLLK), 191–212 (SLVA…ADSK), 213–235 (AISY…WKTP), 236–257 (NLLF…EFFR), 260–281 (SLDY…LSKS), 282–304 (RISY…TCWK), 307–329 (SLRI…IFDH), and 331–353 (PLQY…LDCA). Residues asparagine 265, asparagine 287, and asparagine 296 are each glycosylated (N-linked (GlcNAc...) asparagine). 20 N-linked (GlcNAc...) asparagine glycosylation sites follow: asparagine 416, asparagine 436, asparagine 451, asparagine 491, asparagine 513, asparagine 596, asparagine 605, asparagine 634, asparagine 704, asparagine 710, asparagine 740, asparagine 741, asparagine 771, asparagine 788, asparagine 801, asparagine 826, asparagine 843, asparagine 861, asparagine 875, and asparagine 907. A coiled-coil region spans residues 886–946 (SLNNNNNNNN…NNNENNNENK (61 aa)). Over residues 891–909 (NNNNNNNNNKNNNNNNNDS) the composition is skewed to low complexity. Positions 891–945 (NNNNNNNNNKNNNNNNNDSNNEKEVVEDEEEDLDYSSQNDNNNINNNNNENNNEN) are disordered. The segment covering 915 to 924 (VVEDEEEDLD) has biased composition (acidic residues). A compositionally biased stretch (low complexity) spans 929–945 (NDNNNINNNNNENNNEN). N-linked (GlcNAc...) asparagine glycans are attached at residues asparagine 953, asparagine 970, asparagine 1090, and asparagine 1100. Residues 1160–1180 (YYIVFFGCASGLILVLVICIV) form a helical membrane-spanning segment. Positions 1227–1276 (DLNNNNNNNNNNNNNNNNNNNNNNNNNNNNNNNNNFNDGSDTFNNNNKKN) are enriched in low complexity. The disordered stretch occupies residues 1227 to 1378 (DLNNNNNNNN…KKHLTIINKK (152 aa)). The span at 1289 to 1304 (DGKENDIKNINNKKDE) shows a compositional bias: basic and acidic residues. Acidic residues predominate over residues 1305-1324 (KEDDGDDDDDEDDDEYEDDT). Positions 1328-1353 (SSGNSSRSKGSDGGSSSNSLSSDKQS) are enriched in low complexity. N-linked (GlcNAc...) asparagine glycosylation is found at asparagine 1331 and asparagine 1360. Residues 1354 to 1364 (FNNGNENNSII) show a composition bias toward polar residues. Basic residues predominate over residues 1368-1378 (KKKHLTIINKK).

It localises to the membrane. The polypeptide is S-cell enriched with leucine-rich repeat-containing protein slrA (slrA) (Dictyostelium discoideum (Social amoeba)).